A 719-amino-acid polypeptide reads, in one-letter code: DNA ligase (719 aa).

NAD(+) is bound by residues 42–46 (DAAYD), 92–93 (SL), and E126. The active-site N6-AMP-lysine intermediate is the K128. NAD(+)-binding residues include R149, E185, K301, and K325. Zn(2+)-binding residues include C430, C433, C448, and C454. A BRCT domain is found at 640–719 (ATGSPVEGKT…DDWFKLVGED (80 aa)).

The protein belongs to the NAD-dependent DNA ligase family. LigA subfamily. Requires Mg(2+) as cofactor. Mn(2+) serves as cofactor.

The catalysed reaction is NAD(+) + (deoxyribonucleotide)n-3'-hydroxyl + 5'-phospho-(deoxyribonucleotide)m = (deoxyribonucleotide)n+m + AMP + beta-nicotinamide D-nucleotide.. Functionally, DNA ligase that catalyzes the formation of phosphodiester linkages between 5'-phosphoryl and 3'-hydroxyl groups in double-stranded DNA using NAD as a coenzyme and as the energy source for the reaction. It is essential for DNA replication and repair of damaged DNA. The chain is DNA ligase from Brucella suis biovar 1 (strain 1330).